A 376-amino-acid polypeptide reads, in one-letter code: Nuclear egress protein 1 (376 aa).

The residue at position 19 (S19) is a Phosphoserine. The segment at R22–P57 is disordered. Over residues V33 to N45 the composition is skewed to polar residues. The CCCH-type zinc finger occupies C106 to H211. The segment at V316–P376 is disordered. Residues V317–P332 show a composition bias toward polar residues.

The protein belongs to the herpesviridae NEC1 protein family. As to quaternary structure, forms a heterohexameric complex with NEC2. Interacts with capsid vertex specific component 2/CVC2; this interaction directs the capsid to the host inner nuclear membrane to initiate budding. In terms of processing, phosphorylated at serine residues in the N-terminus. This phosphorylation regulates the localization within the inner nuclear membrane. Phosphorylation by viral kinase UL97 at Ser-19 plays an important role for correct viral nuclear egress complex (NEC) localization.

Its subcellular location is the host nucleus inner membrane. Functionally, plays an essential role in virion nuclear egress, the first step of virion release from infected cell. Within the host nucleus, NEC1 interacts with the newly formed capsid through the vertexes and directs it to the inner nuclear membrane by associating with NEC2. Induces the budding of the capsid at the inner nuclear membrane as well as its envelopment into the perinuclear space. There, the NEC1/NEC2 complex promotes the fusion of the enveloped capsid with the outer nuclear membrane and the subsequent release of the viral capsid into the cytoplasm where it will reach the secondary budding sites in the host Golgi or trans-Golgi network. This is Nuclear egress protein 1 from Homo sapiens (Human).